The chain runs to 150 residues: Small ribosomal subunit protein uS15 (150 aa).

The interval 1 to 22 is disordered; sequence MNKRREKGQSHSTRPPHPQPPQ.

It belongs to the universal ribosomal protein uS15 family. Part of the 30S ribosomal subunit.

This chain is Small ribosomal subunit protein uS15, found in Aeropyrum pernix (strain ATCC 700893 / DSM 11879 / JCM 9820 / NBRC 100138 / K1).